The primary structure comprises 690 residues: MANDPRNFPQRKLLVTCALPYANGSIHLGHMLEHIQADIWVRYQRLRGNIVNFICADDAHGTPIMLKAQQMGMSPEEMIAAVSIEHQKDFAGFDISFDNYHSTHSDENRELASHIYLQLKKNGFISSRTISQLFDPEKEMFLPDRFVKGTCPKCKSEDQYGDNCDACGETYSPTELINPKSAVSGATPVMKDSEHFFFDLPQFESMLKEWTRSGSLQTETANKMQEWFESGLQQWDISRDAPYFGFEIPGEKDKFFYVWLDAPIGYMGSFKNLCDKRDDLDFDEYWNKDSKTELYHFIGKDIVYFHSLFWPAMLDGSGFRKPNNVFVHGYVTVNGAKMSKSKGTFVKASTYLEHLDPECLRYYYAAKLNSRIDDLDLNLEDFTQRVNADVVNKIVNLASRNAGFIAKRFEGKLAENFVEPELYNEFVAAADRIAELYEAREFGRAIREITALADKANQYVDEKAPWVVAKQEGKDQELQEICSVGINLFRVLMTYLKPVMPALAARTEAFLNEELTWEGVAQPLTAHEITAFKALFNRIDPKNIEAMIEASKEDAAAEMAAKEKAEASNAAQETELSKDPIAEEIEFDDFAKVDLRIAKIVSCESVPKADKLLKFQLDIGGEMRQVFSGIKAAYNPEDLVGKYTVVVANLKPRKMKFGMSEGMILAAGPGGKDLWILEPHEGAQPGMRVM.

Positions 20 to 30 match the 'HIGH' region motif; the sequence is PYANGSIHLGH. Residues Cys151, Cys154, Cys164, and Cys167 each contribute to the Zn(2+) site. The 'KMSKS' region signature appears at 337–341; that stretch reads KMSKS. Lys340 is a binding site for ATP. In terms of domain architecture, tRNA-binding spans 589 to 690; the sequence is DFAKVDLRIA…EGAQPGMRVM (102 aa).

The protein belongs to the class-I aminoacyl-tRNA synthetase family. MetG type 1 subfamily. Homodimer. Requires Zn(2+) as cofactor.

The protein resides in the cytoplasm. It carries out the reaction tRNA(Met) + L-methionine + ATP = L-methionyl-tRNA(Met) + AMP + diphosphate. In terms of biological role, is required not only for elongation of protein synthesis but also for the initiation of all mRNA translation through initiator tRNA(fMet) aminoacylation. The protein is Methionine--tRNA ligase of Vibrio vulnificus (strain YJ016).